The sequence spans 553 residues: Probable cytochrome P450 301a1, mitochondrial (553 aa).

Cysteine 502 provides a ligand contact to heme.

Belongs to the cytochrome P450 family. The cofactor is heme.

It is found in the mitochondrion membrane. In Drosophila melanogaster (Fruit fly), this protein is Probable cytochrome P450 301a1, mitochondrial (Cyp301a1).